Reading from the N-terminus, the 674-residue chain is Nucleoporin NDC1 (674 aa).

Residues Met-1–Arg-24 are Cytoplasmic-facing. The chain crosses the membrane as a helical span at residues Ile-25–Ile-45. Over Phe-46–Ser-68 the chain is Perinuclear space. A helical transmembrane segment spans residues Tyr-69 to Val-89. Residues Glu-90–Gln-114 lie on the Cytoplasmic side of the membrane. A helical transmembrane segment spans residues Leu-115–Ile-135. The Perinuclear space portion of the chain corresponds to Thr-136–Tyr-165. The chain crosses the membrane as a helical span at residues His-166–Val-186. Topologically, residues Asn-187–Arg-225 are cytoplasmic. A helical transmembrane segment spans residues Asn-226–Met-246. At Asn-247–His-272 the chain is on the perinuclear space side. A helical membrane pass occupies residues Val-273 to Ile-293. Residues Tyr-294–Glu-674 lie on the Cytoplasmic side of the membrane. The interval Ser-394–Val-425 is disordered. Ser-406 carries the phosphoserine modification. Residues Pro-407–Pro-421 show a composition bias toward polar residues. Thr-414 is subject to Phosphothreonine. At Ser-439 the chain carries Phosphoserine. Thr-440 carries the post-translational modification Phosphothreonine. Position 445 is a phosphoserine (Ser-445). Phosphothreonine is present on Thr-449. Phosphoserine occurs at positions 471 and 474.

Belongs to the NDC1 family. As to quaternary structure, interacts with the NUP35/NUP53. Interacts with AAAS, anchoring it to the nuclear envelope.

The protein localises to the nucleus. It localises to the nuclear pore complex. The protein resides in the nucleus membrane. Functionally, component of the nuclear pore complex (NPC), which plays a key role in de novo assembly and insertion of NPC in the nuclear envelope. Required for NPC and nuclear envelope assembly, possibly by forming a link between the nuclear envelope membrane and soluble nucleoporins, thereby anchoring the NPC in the membrane. The sequence is that of Nucleoporin NDC1 (NDC1) from Homo sapiens (Human).